A 328-amino-acid chain; its full sequence is ABC transporter I family member 20 (328 aa).

The ABC transporter domain occupies 14–257 (VEISGLRFTY…SKKSLMRTVE (244 aa)). Position 55–62 (55–62 (GSNGAGKT)) interacts with ATP. The interval 263-295 (ERDEERKRRKERKANGLPEFETRTEESRVTGDP) is disordered. Basic and acidic residues predominate over residues 282-291 (FETRTEESRV).

Belongs to the ABC transporter superfamily. ABCI family.

The protein localises to the cytoplasm. The sequence is that of ABC transporter I family member 20 (ABCI20) from Arabidopsis thaliana (Mouse-ear cress).